A 293-amino-acid chain; its full sequence is Homoserine kinase (293 aa).

84–94 (PLSRGLGSSSA) serves as a coordination point for ATP.

The protein belongs to the GHMP kinase family. Homoserine kinase subfamily.

It is found in the cytoplasm. It catalyses the reaction L-homoserine + ATP = O-phospho-L-homoserine + ADP + H(+). Its pathway is amino-acid biosynthesis; L-threonine biosynthesis; L-threonine from L-aspartate: step 4/5. Its function is as follows. Catalyzes the ATP-dependent phosphorylation of L-homoserine to L-homoserine phosphate. The sequence is that of Homoserine kinase from Nitratiruptor sp. (strain SB155-2).